The sequence spans 1105 residues: Probable diguanylate cyclase DgcE (1105 aa).

Transmembrane regions (helical) follow at residues leucine 9–phenylalanine 29, glutamine 38–tyrosine 58, methionine 64–phenylalanine 84, serine 88–leucine 108, leucine 127–threonine 147, phenylalanine 156–leucine 176, leucine 190–leucine 207, tyrosine 211–valine 228, phenylalanine 236–leucine 256, and tryptophan 270–phenylalanine 290. A PAS 1 domain is found at serine 300 to glutamate 370. 2 consecutive PAC domains span residues tyrosine 374–glutamine 426 and phenylalanine 501–glutamine 552. The region spanning glutamate 553 to threonine 623 is the PAS 2 domain. The PAC 3 domain occupies serine 626–tyrosine 680. The region spanning glutamine 712 to proline 845 is the GGDEF domain. Position 720 (aspartate 720) interacts with Mg(2+). Asparagine 728, histidine 733, and aspartate 737 together coordinate substrate. Aspartate 763 is a binding site for Mg(2+). Aspartate 763 acts as the Proton acceptor in catalysis. Arginine 783 provides a ligand contact to substrate. The region spanning alanine 855–isoleucine 1104 is the EAL domain.

Homodimer. Requires Mg(2+) as cofactor.

Its subcellular location is the cell inner membrane. It catalyses the reaction 2 GTP = 3',3'-c-di-GMP + 2 diphosphate. The protein operates within purine metabolism; 3',5'-cyclic di-GMP biosynthesis. In terms of biological role, catalyzes the synthesis of cyclic-di-GMP (c-di-GMP) via the condensation of 2 GTP molecules. Involved in the control of the switch from cell motility to adhesion via regulation of cellular levels of c-di-GMP. Part of a signaling cascade that regulates curli biosynthesis. The cascade is composed of two c-di-GMP control modules, in which c-di-GMP controlled by the DgcE/PdeH pair (module I) regulates the activity of the DgcM/PdeR pair (module II), which in turn regulates activity of the transcription factor MlrA and expression of the master biofilm regulator csgD. The protein is Probable diguanylate cyclase DgcE of Escherichia coli (strain K12).